The primary structure comprises 307 residues: Alginate lyase (307 aa).

The N-terminal stretch at Met-1 to Ala-20 is a signal peptide.

This sequence belongs to the polysaccharide lyase 7 family.

It is found in the secreted. The enzyme catalyses Eliminative cleavage of alginate to give oligosaccharides with 4-deoxy-alpha-L-erythro-hex-4-enuronosyl groups at their non-reducing ends and beta-D-mannuronate at their reducing end.. In terms of biological role, degrades alginates that contain guluronic acid. The chain is Alginate lyase (alyA) from Klebsiella pneumoniae.